The chain runs to 533 residues: Putative sel1-like repeat-containing protein L21 (533 aa).

Sel1-like repeat units follow at residues 105–140 (VLSQ…NQGL), 141–172 (SFAQ…QSGY), 173–206 (YLSN…NQGC), 207–242 (NISQ…KQGN), and 243–278 (YFSQ…NCGH).

The chain is Putative sel1-like repeat-containing protein L21 from Acanthamoeba polyphaga mimivirus (APMV).